Reading from the N-terminus, the 329-residue chain is Segregation and condensation protein B (329 aa).

Disordered regions lie at residues 1-39, 252-274, and 286-329; these read MTTG…GPAD, IVEK…SDPA, and SEAA…PKPE.

The protein belongs to the ScpB family. Homodimer. Homodimerization may be required to stabilize the binding of ScpA to the Smc head domains. Component of the Structural Maintenance of Chromosome (SMC) condensin-like complex composed of ScpA, ScpB and the Smc homodimer. ScpA and ScpB bind to the head domain of Smc, the presence of the three proteins is required for the association of the complex with DNA.

Its subcellular location is the cytoplasm. Functionally, a conditionally essential component of the chromosome segregation machinery. Required for chromosome condensation and partitioning. Important for positioning and anchoring of ParB-parS complexes (ori of replication) in the subpolar region, and of the ter replication site, as well as for segration of the ParB-parS complex and thus chromosome segregation. Probably acts via the formation of a condensin-like complex containing Smc, ScpA and ScpB that pulls DNA away from mid-cell into both cell halves. The chain is Segregation and condensation protein B from Myxococcus xanthus (strain DK1622).